The primary structure comprises 155 residues: UPF0178 protein TDE_2151 (155 aa).

It belongs to the UPF0178 family.

The chain is UPF0178 protein TDE_2151 from Treponema denticola (strain ATCC 35405 / DSM 14222 / CIP 103919 / JCM 8153 / KCTC 15104).